We begin with the raw amino-acid sequence, 964 residues long: Protein translocase subunit SecA (964 aa).

Residues Gln-86, Gly-104–Thr-108, and Asp-494 contribute to the ATP site. The disordered stretch occupies residues Ala-848–Lys-964. The span at Ala-871–Thr-882 shows a compositional bias: acidic residues. The span at Ala-889–Ser-900 shows a compositional bias: low complexity. Cys-947, Cys-949, Cys-958, and His-959 together coordinate Zn(2+).

This sequence belongs to the SecA family. As to quaternary structure, monomer and homodimer. Part of the essential Sec protein translocation apparatus which comprises SecA, SecYEG and auxiliary proteins SecDF. Other proteins may also be involved. Requires Zn(2+) as cofactor.

It localises to the cell membrane. The protein resides in the cytoplasm. It carries out the reaction ATP + H2O + cellular proteinSide 1 = ADP + phosphate + cellular proteinSide 2.. Part of the Sec protein translocase complex. Interacts with the SecYEG preprotein conducting channel. Has a central role in coupling the hydrolysis of ATP to the transfer of proteins into and across the cell membrane, serving as an ATP-driven molecular motor driving the stepwise translocation of polypeptide chains across the membrane. The protein is Protein translocase subunit SecA of Bifidobacterium longum (strain DJO10A).